We begin with the raw amino-acid sequence, 75 residues long: Defensin J1-1 (75 aa).

A signal peptide spans 1 to 27 (MAGFSKVVATIFLMMLLVFATDMMAEA). 4 disulfides stabilise this stretch: cysteine 30–cysteine 74, cysteine 41–cysteine 61, cysteine 47–cysteine 68, and cysteine 51–cysteine 70.

The protein belongs to the DEFL family. As to quaternary structure, monomer. As to expression, expressed in orange and red ripe fruit and to a lesser extent in mature, green fruit. Present in trace in young, green fruit.

It localises to the secreted. Functionally, plant defense peptide with antifungal activity against F.oxysporum and B.cinerea. This chain is Defensin J1-1, found in Capsicum annuum (Capsicum pepper).